A 1074-amino-acid chain; its full sequence is Isoleucine--tRNA ligase (1074 aa).

Positions 50-60 (PYTSGAAHMGT) match the 'HIGH' region motif. The 'KMSKS' region motif lies at 605–609 (GMSKS). K608 provides a ligand contact to ATP.

Belongs to the class-I aminoacyl-tRNA synthetase family. IleS type 2 subfamily. As to quaternary structure, monomer. It depends on Zn(2+) as a cofactor.

It is found in the cytoplasm. It catalyses the reaction tRNA(Ile) + L-isoleucine + ATP = L-isoleucyl-tRNA(Ile) + AMP + diphosphate. In terms of biological role, catalyzes the attachment of isoleucine to tRNA(Ile). As IleRS can inadvertently accommodate and process structurally similar amino acids such as valine, to avoid such errors it has two additional distinct tRNA(Ile)-dependent editing activities. One activity is designated as 'pretransfer' editing and involves the hydrolysis of activated Val-AMP. The other activity is designated 'posttransfer' editing and involves deacylation of mischarged Val-tRNA(Ile). The chain is Isoleucine--tRNA ligase from Haloarcula marismortui (strain ATCC 43049 / DSM 3752 / JCM 8966 / VKM B-1809) (Halobacterium marismortui).